We begin with the raw amino-acid sequence, 521 residues long: Bifunctional purine biosynthesis protein PurH (521 aa).

Positions 1–145 (MIKQALISVS…KNHRDVTVVV (145 aa)) constitute an MGS-like domain.

The protein belongs to the PurH family.

The catalysed reaction is (6R)-10-formyltetrahydrofolate + 5-amino-1-(5-phospho-beta-D-ribosyl)imidazole-4-carboxamide = 5-formamido-1-(5-phospho-D-ribosyl)imidazole-4-carboxamide + (6S)-5,6,7,8-tetrahydrofolate. The enzyme catalyses IMP + H2O = 5-formamido-1-(5-phospho-D-ribosyl)imidazole-4-carboxamide. Its pathway is purine metabolism; IMP biosynthesis via de novo pathway; 5-formamido-1-(5-phospho-D-ribosyl)imidazole-4-carboxamide from 5-amino-1-(5-phospho-D-ribosyl)imidazole-4-carboxamide (10-formyl THF route): step 1/1. It functions in the pathway purine metabolism; IMP biosynthesis via de novo pathway; IMP from 5-formamido-1-(5-phospho-D-ribosyl)imidazole-4-carboxamide: step 1/1. In Burkholderia cenocepacia (strain ATCC BAA-245 / DSM 16553 / LMG 16656 / NCTC 13227 / J2315 / CF5610) (Burkholderia cepacia (strain J2315)), this protein is Bifunctional purine biosynthesis protein PurH.